Here is a 969-residue protein sequence, read N- to C-terminus: Squamosa promoter-binding-like protein 6 (969 aa).

2 disordered regions span residues M1–R25 and E54–R81. Residues A55 to S74 are compositionally biased toward low complexity. Residues G149–T226 form an SBP-type zinc finger. Positions 152, 157, 174, 177, 193, 196, 200, and 212 each coordinate Zn(2+). The Bipartite nuclear localization signal motif lies at K209 to K225. The disordered stretch occupies residues G377–D434. The segment covering F393–N419 has biased composition (polar residues). Over residues S420–S431 the composition is skewed to low complexity.

Ubiquitous.

It localises to the nucleus. Its function is as follows. Trans-acting factor that binds specifically to the consensus nucleotide sequence 5'-TNCGTACAA-3'. This chain is Squamosa promoter-binding-like protein 6 (SPL6), found in Oryza sativa subsp. japonica (Rice).